Reading from the N-terminus, the 376-residue chain is Drebrin-like protein B (376 aa).

Residues 2–133 (SVNLSKNGAA…EPESIMEKVA (132 aa)) form the ADF-H domain. The stretch at 175 to 231 (KENFWAKAEKDEEERRIEEHRRANVEKDRLERERKEREQREAEERERRFRERSKEID) forms a coiled coil. Over residues 202-242 (DRLERERKEREQREAEERERRFRERSKEIDGHRKQQEEVEK) the composition is skewed to basic and acidic residues. The tract at residues 202–288 (DRLERERKER…FTASQQEEEN (87 aa)) is disordered. The segment covering 268-283 (ESGSVSAQPEQFTASQ) has biased composition (polar residues). One can recognise an SH3 domain in the interval 317–376 (DSGMCARALYDYQAADDTEISFDPDDVIIQIEMIDDGWWRGVAPSGHFGMFPANYVELLE).

Belongs to the ABP1 family.

The protein localises to the cytoplasm. It localises to the cytoskeleton. It is found in the cell projection. The protein resides in the lamellipodium. Its subcellular location is the ruffle. The protein localises to the cell cortex. It localises to the cytosol. It is found in the synapse. The protein resides in the perikaryon. Its subcellular location is the neuron projection. The protein localises to the cell membrane. It localises to the cytoplasmic vesicle. It is found in the clathrin-coated vesicle membrane. The protein resides in the golgi apparatus membrane. Its subcellular location is the podosome. The protein localises to the early endosome. It localises to the dendrite. It is found in the postsynaptic density. Its function is as follows. Adapter protein that binds F-actin and dynamin, and thereby plays a role in receptor-mediated endocytosis. Plays a role in the reorganization of the actin cytoskeleton, formation of cell projections, such as neurites, in neuron morphogenesis and synapse formation. Does not bind G-actin and promote actin polymerization by itself, but excerts its functions by interaction with other proteins. Required for the formation of organized podosome rosettes. This chain is Drebrin-like protein B (dbnl-b), found in Xenopus laevis (African clawed frog).